Consider the following 188-residue polypeptide: Large ribosomal subunit protein uL10 (188 aa).

This sequence belongs to the universal ribosomal protein uL10 family. In terms of assembly, part of the ribosomal stalk of the 50S ribosomal subunit. The N-terminus interacts with L11 and the large rRNA to form the base of the stalk. The C-terminus forms an elongated spine to which L12 dimers bind in a sequential fashion forming a multimeric L10(L12)X complex.

In terms of biological role, forms part of the ribosomal stalk, playing a central role in the interaction of the ribosome with GTP-bound translation factors. The chain is Large ribosomal subunit protein uL10 from Crocosphaera subtropica (strain ATCC 51142 / BH68) (Cyanothece sp. (strain ATCC 51142)).